Here is a 191-residue protein sequence, read N- to C-terminus: NF-kappa-B inhibitor-interacting Ras-like protein 2 (191 aa).

A small GTPase-like region spans residues 1-191; the sequence is MGKSCKVVVC…KNKGSGSLDG (191 aa). Position 11-18 (11-18) interacts with GTP; the sequence is GQASVGKT. An Effector region motif is present at residues 35-43; the sequence is MIETQEDIY. GTP is bound by residues 61 to 65 and 120 to 123; these read DTRGL and NKCD. The tract at residues 169–191 is disordered; sequence TQPQSKSAFPLSRKNKGSGSLDG.

Belongs to the small GTPase superfamily. Ras family. KappaB-Ras subfamily. Interacts with both NF-kappa-B inhibitor alpha (NFKBIA) and beta (NFKBIB) in vitro. However, it probably only interacts with NFKBIB in vivo. Interacts with GFOD1.

It is found in the cytoplasm. Functionally, atypical Ras-like protein that acts as a potent regulator of NF-kappa-B activity by preventing the degradation of NF-kappa-B inhibitor beta (NFKBIB) by most signals, explaining why NFKBIB is more resistant to degradation. May act by blocking phosphorylation of NFKBIB and nuclear localization of p65/RELA NF-kappa-B subunit. It is unclear whether it acts as a GTPase. Both GTP- and GDP-bound forms block phosphorylation of NFKBIB. The polypeptide is NF-kappa-B inhibitor-interacting Ras-like protein 2 (Nkiras2) (Mus musculus (Mouse)).